Here is a 525-residue protein sequence, read N- to C-terminus: CTP synthase (525 aa).

An amidoligase domain region spans residues 1–269; it reads MKYIIVTGGV…ADAITTHLHL (269 aa). S12 contributes to the CTP binding site. Residue S12 coordinates UTP. Residues 13–18 and D70 each bind ATP; that span reads GLGKGI. Residues D70 and E144 each contribute to the Mg(2+) site. CTP is bound by residues 151–153, 190–195, and K226; these read DIE and KTKPTQ. UTP contacts are provided by residues 190–195 and K226; that span reads KTKPTQ. In terms of domain architecture, Glutamine amidotransferase type-1 spans 292-524; that stretch reads VAIVSKYGIE…VSACRKNKKT (233 aa). Residue G348 coordinates L-glutamine. C375 (nucleophile; for glutamine hydrolysis) is an active-site residue. L-glutamine-binding positions include 376-379, E399, and R454; that span reads LGFQ. Residues H497 and E499 contribute to the active site.

It belongs to the CTP synthase family. Homotetramer.

The enzyme catalyses UTP + L-glutamine + ATP + H2O = CTP + L-glutamate + ADP + phosphate + 2 H(+). The catalysed reaction is L-glutamine + H2O = L-glutamate + NH4(+). It carries out the reaction UTP + NH4(+) + ATP = CTP + ADP + phosphate + 2 H(+). It participates in pyrimidine metabolism; CTP biosynthesis via de novo pathway; CTP from UDP: step 2/2. Its activity is regulated as follows. Allosterically activated by GTP, when glutamine is the substrate; GTP has no effect on the reaction when ammonia is the substrate. The allosteric effector GTP functions by stabilizing the protein conformation that binds the tetrahedral intermediate(s) formed during glutamine hydrolysis. Inhibited by the product CTP, via allosteric rather than competitive inhibition. Functionally, catalyzes the ATP-dependent amination of UTP to CTP with either L-glutamine or ammonia as the source of nitrogen. Regulates intracellular CTP levels through interactions with the four ribonucleotide triphosphates. The chain is CTP synthase from Methanosphaerula palustris (strain ATCC BAA-1556 / DSM 19958 / E1-9c).